Reading from the N-terminus, the 403-residue chain is Lipid droplet-regulating VLDL assembly factor AUP1 (403 aa).

Over 1–21 (MEQPSVESLLELRRFPRKQLS) the chain is Cytoplasmic. Residues 22–42 (LILLLLYSPLGLCLFLIRLFI) lie within the membrane without spanning it. Topologically, residues 43–399 (GAHVFLVSCV…GSVGREEEEK (357 aa)) are cytoplasmic. One can recognise a CUE domain in the interval 286-328 (TQMQMAQHVKEVLPQVPLSAIHRDLGHTGCIDTTITNFLEGRV).

This sequence belongs to the AUP1 family.

It localises to the endoplasmic reticulum membrane. The protein resides in the lipid droplet. In terms of biological role, plays a role in the translocation of terminally misfolded proteins from the endoplasmic reticulum lumen to the cytoplasm and their degradation by the proteasome. Plays a role in lipid droplet formation. Induces lipid droplet clustering. The polypeptide is Lipid droplet-regulating VLDL assembly factor AUP1 (Xenopus tropicalis (Western clawed frog)).